A 417-amino-acid chain; its full sequence is Squalene synthase (417 aa).

Residues R52 and R77 each contribute to the NADP(+) site. Positions 80, 83, and 84 each coordinate Mg(2+). R218 contacts NADP(+). The helical transmembrane segment at 284–304 (SVFNFCAIPQVMAIATLAACY) threads the bilayer. The NADP(+) site is built by K315 and R317. The chain crosses the membrane as a helical span at residues 384–404 (PIYLSFVMLLAALSWQYLTTL).

The protein belongs to the phytoene/squalene synthase family. It depends on Mg(2+) as a cofactor. Widely expressed.

The protein resides in the endoplasmic reticulum membrane. The enzyme catalyses 2 (2E,6E)-farnesyl diphosphate + NADPH + H(+) = squalene + 2 diphosphate + NADP(+). The catalysed reaction is 2 (2E,6E)-farnesyl diphosphate + NADH + H(+) = squalene + 2 diphosphate + NAD(+). It catalyses the reaction 2 (2E,6E)-farnesyl diphosphate = presqualene diphosphate + diphosphate. It carries out the reaction presqualene diphosphate + NADH + H(+) = squalene + diphosphate + NAD(+). The enzyme catalyses presqualene diphosphate + NADPH + H(+) = squalene + diphosphate + NADP(+). The protein operates within terpene metabolism; lanosterol biosynthesis; lanosterol from farnesyl diphosphate: step 1/3. Its function is as follows. Catalyzes the condensation of 2 farnesyl pyrophosphate (FPP) moieties to form squalene. Proceeds in two distinct steps. In the first half-reaction, two molecules of FPP react to form the stable presqualene diphosphate intermediate (PSQPP), with concomitant release of a proton and a molecule of inorganic diphosphate. In the second half-reaction, PSQPP undergoes heterolysis, isomerization, and reduction with NADPH or NADH to form squalene. It is the first committed enzyme of the sterol biosynthesis pathway. This Homo sapiens (Human) protein is Squalene synthase (FDFT1).